A 462-amino-acid chain; its full sequence is Histidine--tRNA ligase (462 aa).

Belongs to the class-II aminoacyl-tRNA synthetase family. Homodimer.

It is found in the cytoplasm. It carries out the reaction tRNA(His) + L-histidine + ATP = L-histidyl-tRNA(His) + AMP + diphosphate + H(+). The sequence is that of Histidine--tRNA ligase from Trichormus variabilis (strain ATCC 29413 / PCC 7937) (Anabaena variabilis).